The primary structure comprises 220 residues: Deoxyribose-phosphate aldolase (220 aa).

Aspartate 89 functions as the Proton donor/acceptor in the catalytic mechanism. Residue lysine 151 is the Schiff-base intermediate with acetaldehyde of the active site. Lysine 180 functions as the Proton donor/acceptor in the catalytic mechanism.

It belongs to the DeoC/FbaB aldolase family. DeoC type 1 subfamily.

The protein resides in the cytoplasm. It carries out the reaction 2-deoxy-D-ribose 5-phosphate = D-glyceraldehyde 3-phosphate + acetaldehyde. It functions in the pathway carbohydrate degradation; 2-deoxy-D-ribose 1-phosphate degradation; D-glyceraldehyde 3-phosphate and acetaldehyde from 2-deoxy-alpha-D-ribose 1-phosphate: step 2/2. Catalyzes a reversible aldol reaction between acetaldehyde and D-glyceraldehyde 3-phosphate to generate 2-deoxy-D-ribose 5-phosphate. In Staphylococcus saprophyticus subsp. saprophyticus (strain ATCC 15305 / DSM 20229 / NCIMB 8711 / NCTC 7292 / S-41), this protein is Deoxyribose-phosphate aldolase.